The chain runs to 98 residues: MARITVEDCLEVVNNRFELVMMASKRARQLANGVPPLIENNSEDKPTVLALREIAARKINSKMIDEIEKAERERTEREAMEWAAAEVVADEDISKSDD.

It belongs to the RNA polymerase subunit omega family. As to quaternary structure, the RNAP catalytic core consists of 2 alpha, 1 beta, 1 beta' and 1 omega subunit. When a sigma factor is associated with the core the holoenzyme is formed, which can initiate transcription.

It catalyses the reaction RNA(n) + a ribonucleoside 5'-triphosphate = RNA(n+1) + diphosphate. Its function is as follows. Promotes RNA polymerase assembly. Latches the N- and C-terminal regions of the beta' subunit thereby facilitating its interaction with the beta and alpha subunits. This Xylella fastidiosa (strain M12) protein is DNA-directed RNA polymerase subunit omega.